The primary structure comprises 283 residues: Pantothenate synthetase (283 aa).

An ATP-binding site is contributed by 30–37 (MGNLHDGH). The active-site Proton donor is His-37. Gln-61 is a (R)-pantoate binding site. Gln-61 lines the beta-alanine pocket. 149–152 (GEKD) contacts ATP. Gln-155 contributes to the (R)-pantoate binding site. 186 to 189 (LSSR) contacts ATP.

This sequence belongs to the pantothenate synthetase family. As to quaternary structure, homodimer.

Its subcellular location is the cytoplasm. It carries out the reaction (R)-pantoate + beta-alanine + ATP = (R)-pantothenate + AMP + diphosphate + H(+). It functions in the pathway cofactor biosynthesis; (R)-pantothenate biosynthesis; (R)-pantothenate from (R)-pantoate and beta-alanine: step 1/1. Catalyzes the condensation of pantoate with beta-alanine in an ATP-dependent reaction via a pantoyl-adenylate intermediate. This is Pantothenate synthetase from Escherichia coli O45:K1 (strain S88 / ExPEC).